The sequence spans 189 residues: Apolipoprotein D (189 aa).

Positions 1–20 (MVPVLLLLPALAGLFGAAEG) are cleaved as a signal peptide. Residue Gln21 is modified to Pyrrolidone carboxylic acid. Intrachain disulfides connect Cys28-Cys134 and Cys61-Cys185. N-linked (GlcNAc...) asparagine glycans are attached at residues Asn65 and Asn98.

Belongs to the calycin superfamily. Lipocalin family. In terms of assembly, homodimer.

It localises to the secreted. Its function is as follows. APOD occurs in the macromolecular complex with lecithin-transport and binding of bilin. Appears to be able to transport a variety of ligands in a number of different contexts. The chain is Apolipoprotein D (APOD) from Bos taurus (Bovine).